The chain runs to 167 residues: MSHRALYPGTFDPITNGHVDVVQRAARLFDFLIVGIYAGHEGRAKQPLFSAEERRFLAEQALRHLPNVRVDVFSGLAVDYARAVGAQAIVRGLRAVSDFEYEFSLAHMYRHLAPDVDVVCLMTSSQYSFISSSMIKEVAQLGGNLTGLVPDHVAEALVQKFRTLVRE.

Threonine 10 serves as a coordination point for substrate. Residues 10–11 (TF) and histidine 18 contribute to the ATP site. 2 residues coordinate substrate: alanine 77 and arginine 91. Residues 92–94 (GLR), glutamate 102, and 127–133 (YSFISSS) each bind ATP.

Belongs to the bacterial CoaD family. As to quaternary structure, homohexamer. It depends on Mg(2+) as a cofactor.

The protein resides in the cytoplasm. The enzyme catalyses (R)-4'-phosphopantetheine + ATP + H(+) = 3'-dephospho-CoA + diphosphate. The protein operates within cofactor biosynthesis; coenzyme A biosynthesis; CoA from (R)-pantothenate: step 4/5. Its function is as follows. Reversibly transfers an adenylyl group from ATP to 4'-phosphopantetheine, yielding dephospho-CoA (dPCoA) and pyrophosphate. The protein is Phosphopantetheine adenylyltransferase of Thermomicrobium roseum (strain ATCC 27502 / DSM 5159 / P-2).